The sequence spans 312 residues: Pre-mRNA-splicing factor 38A (312 aa).

The N-terminal protein interaction domain stretch occupies residues 1–179; it reads MANRTVKDAH…VLEEAEQLEP (179 aa). Phosphoserine occurs at positions 11, 193, 194, 209, and 226. The stretch at 170–204 forms a coiled coil; the sequence is VLEEAEQLEPRVSALEEDMDDVESSEEEEEEDEKL. The interval 181–312 is disordered; the sequence is VSALEEDMDD…SHKKSRRGNE (132 aa). The segment covering 184 to 202 has biased composition (acidic residues); the sequence is LEEDMDDVESSEEEEEEDE. A compositionally biased stretch (basic and acidic residues) spans 203–224; it reads KLERVPSPDHRRRSYRDLDKPR. Composition is skewed to basic residues over residues 225–294 and 301–312; these read RSPA…RSHS and KKSHKKSRRGNE.

This sequence belongs to the PRP38 family. Component of the spliceosome B complex. Interacts (via N-terminal interaction domain) with ZMAT2 and MFAP1.

The protein localises to the nucleus. In terms of biological role, involved in pre-mRNA splicing as a component of the spliceosome. This Mus musculus (Mouse) protein is Pre-mRNA-splicing factor 38A (Prpf38a).